Reading from the N-terminus, the 624-residue chain is MNNIEATLFLCFFCIFSSSNVHFAGAKQTAGNITPSENPFTPKASLIRYWNNHINGDSPKPSFFLSKASPLTAVDSTRFASLASNHALNTHHSDFCSAAKLFCFPELAAHSLEKHGDDVNFAAYSGKNFTNYGSDRLSGADSFKNYSGGDNIAVDSFRRYSRNSAGHDDGFTNYAGEVNVADQSFTTYATGTTGGSGEFTNYNTDANEPNGRFTSYSDKANGRSQTFTTYSENGNTGYQSFTSYSKNGNGAPNEFSGYGTGSNVVNTGFTKYGESANGANDSFTSYGENGNVPVNEFKGYGDGGNGAVYGFKNYRDQSNIGVDSFSSYAKNSNNEKVNFVNYGKSFNLGSDNFTGYGQDNVGGNVSFKTYGQGQSFKVYTKDGVVFARYSNNVSSNGKTVNKWVEEGKFFREAMLKEGTLMQMPDIKDKMPKRTFLPRNIVKNLPFSSSTIGEIWRVFGAGENSSMAGIISSAVSECERPASHGETKRCVGSAEDMIDFATSVLGRGVVVRTTENVVGSKKKVVIGKVNGINGGDVTRAVSCHQSLYPYLLYYCHSVPRVRVYETDLLDPKSLEKINHGVAICHIDTSAWSPSHGAFLALGSGPGQIEVCHWIFENDMTWNIID.

The first 26 residues, 1 to 26, serve as a signal peptide directing secretion; sequence MNNIEATLFLCFFCIFSSSNVHFAGA. Residues 121-124 form an FXXY 1 repeat; the sequence is FAAY. Asn128 carries N-linked (GlcNAc...) asparagine glycosylation. FXXY repeat units follow at residues 129–132, 143–146, 157–160, 171–174, 185–188, 199–202, 213–216, 227–230, 241–244, 255–258, and 269–272; these read FTNY, FKNY, FRRY, FTTY, FTSY, FSGY, and FTKY. A glycan (N-linked (GlcNAc...) asparagine) is linked at Asn145. Residues 199–219 form a disordered region; the sequence is FTNYNTDANEPNGRFTSYSDK. Residue Asn280 is glycosylated (N-linked (GlcNAc...) asparagine). FXXY repeat units lie at residues 283–286, 297–300, 311–314, 325–328, and 339–342; these read FTSY, FKGY, FKNY, FSSY, and FVNY. N-linked (GlcNAc...) asparagine glycosylation is present at Asn352. One copy of the FXXY 18 repeat lies at 353 to 356; that stretch reads FTGY. N-linked (GlcNAc...) asparagine glycosylation is present at Asn364. FXXY repeat units follow at residues 367–370, 376–379, and 386–389; these read FKTY, FKVY, and FARY. N-linked (GlcNAc...) asparagine glycans are attached at residues Asn392 and Asn463. The 215-residue stretch at 409-623 folds into the BURP domain; it reads FFREAMLKEG…FENDMTWNII (215 aa).

As to expression, expressed in flowers and stems.

It localises to the secreted. It is found in the extracellular space. Its subcellular location is the apoplast. The protein resides in the cell wall. Functionally, involved in cell size determination. The sequence is that of Polygalacturonase 1 beta-like protein 2 from Arabidopsis thaliana (Mouse-ear cress).